Reading from the N-terminus, the 220-residue chain is Large ribosomal subunit protein bL25 (220 aa).

It belongs to the bacterial ribosomal protein bL25 family. CTC subfamily. In terms of assembly, part of the 50S ribosomal subunit; part of the 5S rRNA/L5/L18/L25 subcomplex. Contacts the 5S rRNA. Binds to the 5S rRNA independently of L5 and L18.

In terms of biological role, this is one of the proteins that binds to the 5S RNA in the ribosome where it forms part of the central protuberance. In Zymomonas mobilis subsp. mobilis (strain ATCC 31821 / ZM4 / CP4), this protein is Large ribosomal subunit protein bL25.